A 446-amino-acid polypeptide reads, in one-letter code: Exodeoxyribonuclease 7 large subunit (446 aa).

The protein belongs to the XseA family. Heterooligomer composed of large and small subunits.

The protein localises to the cytoplasm. The catalysed reaction is Exonucleolytic cleavage in either 5'- to 3'- or 3'- to 5'-direction to yield nucleoside 5'-phosphates.. Its function is as follows. Bidirectionally degrades single-stranded DNA into large acid-insoluble oligonucleotides, which are then degraded further into small acid-soluble oligonucleotides. The polypeptide is Exodeoxyribonuclease 7 large subunit (Xanthomonas campestris pv. campestris (strain B100)).